The following is a 100-amino-acid chain: Double-stranded DNA-binding protein (100 aa).

Residues 1–19 mediate DNA binding; that stretch reads MRKMMQREVTYTTAQLARM.

Homodimer. Homomultimer. Binds to double-stranded DNA giving rise to multimeric nucleoprotein complexes.

In terms of biological role, histone-like nucleoprotein that binds to the viral dsDNA and responsible for wrapping and condensing the viral DNA about 4-fold. Forms a nucleoprotein complex in which the DNA adopts a right-handed toroidal conformation winding around a protein core. Binding specificity for the viral genome is based on supercoiling. The formation of the nucleoprotein complex at the genome ends, for which the binding affinity is highest, activates the initiation of viral DNA replication. The binding of p6 would recruit the complex formed by the TP and the DNA polymerase to the origin. Protein p6 is also involved in the early to late transcription switch. The chain is Double-stranded DNA-binding protein from Bacillus phage Nf (Bacteriophage Nf).